The chain runs to 205 residues: Proteasome subunit beta type-3 (205 aa).

Serine 2 carries the post-translational modification N-acetylserine. Lysine 77 bears the N6-acetyllysine mark.

The protein belongs to the peptidase T1B family. The 26S proteasome consists of a 20S proteasome core and two 19S regulatory subunits. The 20S proteasome core is a barrel-shaped complex made of 28 subunits that are arranged in four stacked rings. The two outer rings are each formed by seven alpha subunits, and the two inner rings are formed by seven beta subunits. The proteolytic activity is exerted by three beta-subunits PSMB5, PSMB6 and PSMB7. In terms of tissue distribution, detected in liver (at protein level).

The protein resides in the cytoplasm. It localises to the nucleus. Its function is as follows. Non-catalytic component of the 20S core proteasome complex involved in the proteolytic degradation of most intracellular proteins. This complex plays numerous essential roles within the cell by associating with different regulatory particles. Associated with two 19S regulatory particles, forms the 26S proteasome and thus participates in the ATP-dependent degradation of ubiquitinated proteins. The 26S proteasome plays a key role in the maintenance of protein homeostasis by removing misfolded or damaged proteins that could impair cellular functions, and by removing proteins whose functions are no longer required. Associated with the PA200 or PA28, the 20S proteasome mediates ubiquitin-independent protein degradation. This type of proteolysis is required in several pathways including spermatogenesis (20S-PA200 complex) or generation of a subset of MHC class I-presented antigenic peptides (20S-PA28 complex). In Mus musculus (Mouse), this protein is Proteasome subunit beta type-3 (Psmb3).